Here is a 204-residue protein sequence, read N- to C-terminus: Large ribosomal subunit protein uL13 (204 aa).

This sequence belongs to the universal ribosomal protein uL13 family.

This Choristoneura parallela (Spotted fireworm moth) protein is Large ribosomal subunit protein uL13 (RpL13A).